The primary structure comprises 482 residues: NADH-quinone oxidoreductase subunit N (482 aa).

13 helical membrane passes run 10–30 (ALGP…LILY), 44–64 (VGAI…PLGA), 77–97 (GFAR…LLLA), 113–133 (ILIV…DLIG), 166–186 (FVLG…VYGF), 206–226 (LGLV…LAAV), 243–265 (VTAF…VFIG), 277–296 (IIVF…AIGQ), 302–322 (LMAY…AAGT), 328–348 (GVVV…AVIL), 374–394 (AFCL…AGFF), 397–417 (FYVF…IGVV), and 451–471 (IVLA…APLV).

Belongs to the complex I subunit 2 family. NDH-1 is composed of 14 different subunits. Subunits NuoA, H, J, K, L, M, N constitute the membrane sector of the complex.

The protein localises to the cell inner membrane. It carries out the reaction a quinone + NADH + 5 H(+)(in) = a quinol + NAD(+) + 4 H(+)(out). NDH-1 shuttles electrons from NADH, via FMN and iron-sulfur (Fe-S) centers, to quinones in the respiratory chain. The immediate electron acceptor for the enzyme in this species is believed to be ubiquinone. Couples the redox reaction to proton translocation (for every two electrons transferred, four hydrogen ions are translocated across the cytoplasmic membrane), and thus conserves the redox energy in a proton gradient. This Methylobacterium nodulans (strain LMG 21967 / CNCM I-2342 / ORS 2060) protein is NADH-quinone oxidoreductase subunit N.